We begin with the raw amino-acid sequence, 424 residues long: Histidine--tRNA ligase (424 aa).

Belongs to the class-II aminoacyl-tRNA synthetase family. In terms of assembly, homodimer.

Its subcellular location is the cytoplasm. The catalysed reaction is tRNA(His) + L-histidine + ATP = L-histidyl-tRNA(His) + AMP + diphosphate + H(+). This chain is Histidine--tRNA ligase, found in Shigella boydii serotype 18 (strain CDC 3083-94 / BS512).